The sequence spans 275 residues: Formamidopyrimidine-DNA glycosylase (275 aa).

Residue proline 2 is the Schiff-base intermediate with DNA of the active site. Glutamate 3 acts as the Proton donor in catalysis. Lysine 58 (proton donor; for beta-elimination activity) is an active-site residue. Positions 93, 111, and 156 each coordinate DNA. The segment at 241 to 275 adopts an FPG-type zinc-finger fold; it reads FVYDRAGQPCRVCGTPIRQIVQGQRSTYYCPTCQR. Arginine 265 acts as the Proton donor; for delta-elimination activity in catalysis.

This sequence belongs to the FPG family. In terms of assembly, monomer. Requires Zn(2+) as cofactor.

It catalyses the reaction Hydrolysis of DNA containing ring-opened 7-methylguanine residues, releasing 2,6-diamino-4-hydroxy-5-(N-methyl)formamidopyrimidine.. The catalysed reaction is 2'-deoxyribonucleotide-(2'-deoxyribose 5'-phosphate)-2'-deoxyribonucleotide-DNA = a 3'-end 2'-deoxyribonucleotide-(2,3-dehydro-2,3-deoxyribose 5'-phosphate)-DNA + a 5'-end 5'-phospho-2'-deoxyribonucleoside-DNA + H(+). Its function is as follows. Involved in base excision repair of DNA damaged by oxidation or by mutagenic agents. Acts as a DNA glycosylase that recognizes and removes damaged bases. Has a preference for oxidized purines, such as 7,8-dihydro-8-oxoguanine (8-oxoG). Has AP (apurinic/apyrimidinic) lyase activity and introduces nicks in the DNA strand. Cleaves the DNA backbone by beta-delta elimination to generate a single-strand break at the site of the removed base with both 3'- and 5'-phosphates. The chain is Formamidopyrimidine-DNA glycosylase from Burkholderia cenocepacia (strain ATCC BAA-245 / DSM 16553 / LMG 16656 / NCTC 13227 / J2315 / CF5610) (Burkholderia cepacia (strain J2315)).